The primary structure comprises 185 residues: Peptidyl-tRNA hydrolase (185 aa).

A tRNA-binding site is contributed by Tyr-14. Residue His-19 is the Proton acceptor of the active site. Residues Tyr-64, Asn-66, and Asn-112 each contribute to the tRNA site.

The protein belongs to the PTH family. In terms of assembly, monomer.

Its subcellular location is the cytoplasm. It catalyses the reaction an N-acyl-L-alpha-aminoacyl-tRNA + H2O = an N-acyl-L-amino acid + a tRNA + H(+). In terms of biological role, hydrolyzes ribosome-free peptidyl-tRNAs (with 1 or more amino acids incorporated), which drop off the ribosome during protein synthesis, or as a result of ribosome stalling. Its function is as follows. Catalyzes the release of premature peptidyl moieties from peptidyl-tRNA molecules trapped in stalled 50S ribosomal subunits, and thus maintains levels of free tRNAs and 50S ribosomes. In Lactiplantibacillus plantarum (strain ATCC BAA-793 / NCIMB 8826 / WCFS1) (Lactobacillus plantarum), this protein is Peptidyl-tRNA hydrolase.